The following is a 175-amino-acid chain: General odorant-binding protein 84a (175 aa).

The signal sequence occupies residues M1–A24. Cystine bridges form between C103/C151 and C140/C160.

As to expression, present only in a small number of hairs scattered over the surface of the funiculus.

Its subcellular location is the secreted. The chain is General odorant-binding protein 84a (Obp84a) from Drosophila melanogaster (Fruit fly).